We begin with the raw amino-acid sequence, 405 residues long: UDP-N-acetylglucosamine--N-acetylmuramyl-(pentapeptide) pyrophosphoryl-undecaprenol N-acetylglucosamine transferase (405 aa).

UDP-N-acetyl-alpha-D-glucosamine-binding positions include 11–13, Asn127, Arg168, Ser191, Ile248, and Gln293; that span reads TGG.

It belongs to the glycosyltransferase 28 family. MurG subfamily.

It is found in the cell inner membrane. The catalysed reaction is di-trans,octa-cis-undecaprenyl diphospho-N-acetyl-alpha-D-muramoyl-L-alanyl-D-glutamyl-meso-2,6-diaminopimeloyl-D-alanyl-D-alanine + UDP-N-acetyl-alpha-D-glucosamine = di-trans,octa-cis-undecaprenyl diphospho-[N-acetyl-alpha-D-glucosaminyl-(1-&gt;4)]-N-acetyl-alpha-D-muramoyl-L-alanyl-D-glutamyl-meso-2,6-diaminopimeloyl-D-alanyl-D-alanine + UDP + H(+). Its pathway is cell wall biogenesis; peptidoglycan biosynthesis. In terms of biological role, cell wall formation. Catalyzes the transfer of a GlcNAc subunit on undecaprenyl-pyrophosphoryl-MurNAc-pentapeptide (lipid intermediate I) to form undecaprenyl-pyrophosphoryl-MurNAc-(pentapeptide)GlcNAc (lipid intermediate II). This is UDP-N-acetylglucosamine--N-acetylmuramyl-(pentapeptide) pyrophosphoryl-undecaprenol N-acetylglucosamine transferase from Sorangium cellulosum (strain So ce56) (Polyangium cellulosum (strain So ce56)).